Here is a 319-residue protein sequence, read N- to C-terminus: V-set and transmembrane domain-containing protein 4 (319 aa).

The signal sequence occupies residues 1 to 23 (MRLRLLALAAAVLLGPAPEVCGA). An Ig-like domain is found at 24–154 (LNVTVSPGPV…SSATEMRVIS (131 aa)). Residues asparagine 25 and asparagine 41 are each glycosylated (N-linked (GlcNAc...) asparagine). A disulfide bridge connects residues cysteine 46 and cysteine 126. Asparagine 143 carries N-linked (GlcNAc...) asparagine glycosylation. Residues 180 to 200 (AVLVCCVGILSVLLFTLVIAW) form a helical membrane-spanning segment.

In terms of processing, proteolytically cleaved to generate a bioactive peptide. As to expression, peptide Lv is widely expressed in various tissues and the central nervous system, including the retinal photoreceptor layer, hippocampus, olfactory bulb, and cerebellum.

Its subcellular location is the cell membrane. It is found in the secreted. In terms of biological role, peptide Lv enhances L-type voltage-gated calcium channel (L-VGCC) currents in retinal photoreceptors. The sequence is that of V-set and transmembrane domain-containing protein 4 (Vstm4) from Mus musculus (Mouse).